A 219-amino-acid polypeptide reads, in one-letter code: Small ribosomal subunit protein uS3 (219 aa).

The 69-residue stretch at Ile-38–Lys-106 folds into the KH type-2 domain.

It belongs to the universal ribosomal protein uS3 family. In terms of assembly, part of the 30S ribosomal subunit. Forms a tight complex with proteins S10 and S14.

Functionally, binds the lower part of the 30S subunit head. Binds mRNA in the 70S ribosome, positioning it for translation. This Bacillus cytotoxicus (strain DSM 22905 / CIP 110041 / 391-98 / NVH 391-98) protein is Small ribosomal subunit protein uS3.